The following is a 330-amino-acid chain: Flotillin-like protein FloA (330 aa).

Helical transmembrane passes span 6–26 (LLLF…FTFV) and 28–48 (VMLW…TLVG).

Belongs to the flotillin-like FloA family. As to quaternary structure, homooligomerizes.

The protein localises to the cell membrane. It localises to the membrane raft. Functionally, found in functional membrane microdomains (FMM) that may be equivalent to eukaryotic membrane rafts. FMMs are highly dynamic and increase in number as cells age. Flotillins are thought to be important factors in membrane fluidity. This is Flotillin-like protein FloA from Bacillus pumilus (strain SAFR-032).